Consider the following 339-residue polypeptide: Phenylalanine--tRNA ligase alpha subunit (339 aa).

Mg(2+) is bound at residue Glu-254.

It belongs to the class-II aminoacyl-tRNA synthetase family. Phe-tRNA synthetase alpha subunit type 1 subfamily. As to quaternary structure, tetramer of two alpha and two beta subunits. The cofactor is Mg(2+).

It localises to the cytoplasm. It carries out the reaction tRNA(Phe) + L-phenylalanine + ATP = L-phenylalanyl-tRNA(Phe) + AMP + diphosphate + H(+). The sequence is that of Phenylalanine--tRNA ligase alpha subunit from Clostridium botulinum (strain ATCC 19397 / Type A).